Reading from the N-terminus, the 778-residue chain is Dynein axonemal intermediate chain 4 (778 aa).

6 WD repeats span residues 477–517 (HCES…QTPI), 526–573 (LHTS…ECVD), 586–629 (RHIS…QYLE), 633–673 (AHKR…PVMG), 676–715 (SGQR…LDPT), and 721–760 (SPGV…AGGG).

As to quaternary structure, part of the multisubunit axonemal dynein complex formed at least of two heavy chains and a number of intermediate and light chains.

The protein resides in the cytoplasm. It is found in the cytoskeleton. The protein localises to the flagellum axoneme. Its subcellular location is the cilium axoneme. It localises to the dynein axonemal particle. Functionally, plays a critical role in the assembly of axonemal dynein complex. Plays a key role in ciliary motility. In Danio rerio (Zebrafish), this protein is Dynein axonemal intermediate chain 4.